Here is a 389-residue protein sequence, read N- to C-terminus: Large ribosomal subunit protein uL3 (389 aa).

Belongs to the universal ribosomal protein uL3 family.

Its subcellular location is the cytoplasm. The sequence is that of Large ribosomal subunit protein uL3 (RPL3) from Debaryomyces hansenii (strain ATCC 36239 / CBS 767 / BCRC 21394 / JCM 1990 / NBRC 0083 / IGC 2968) (Yeast).